The primary structure comprises 586 residues: MNIFAAFEERIGEALATLTRAGQLPEGLDLGRVVVEPPRDPGHGDLATNAALVLAKEARTNPKALAELLAAELRQDPRVTEASVAGPGFLNLRLAPEVFAEVVRAALASGEAFGRGARRPGLVNVEYVSANPTGPMHVGHGRGAVFGDALANLLAASGREVVREYYINDAGAQVDVLARSAYLRYREALGDAIGAIPEGLYPGDYLKPVGRRLAETHGRALLREPESAWLPVVRDFAIAAMMDLIRDDLAALGIRHDVFFSERTLQGGGDGGAVGALIAELREKGLVYVGRLPPPKGQLPEDWEDRDQTLFRSTAFGDDIDRPLLKSDGTYTYFASDIAYHASKVARGATDLIDVLGADHGGYVKRMQAAVRAVSDGRASLDVKLCQLVRLLRGGEPVKMSKRAGEFVTLREVIDEVGRDPVRFMMLYRKNDATLDFDLAKVVEQSKDNPVFYVQYAHARTASVFRQAREAFPGEDLSPQALAGADLSLLRDSGEADIMRLVAQYPRVIEAAGSAHEPHRLAFYLYELASAFHSFWNKGKDLPQLRFVNQTDRKSTLSRLALVAALRGVLASGLGILGVTAPDEMR.

The 'HIGH' region motif lies at 130–140; it reads ANPTGPMHVGH.

Belongs to the class-I aminoacyl-tRNA synthetase family. In terms of assembly, monomer.

Its subcellular location is the cytoplasm. It catalyses the reaction tRNA(Arg) + L-arginine + ATP = L-arginyl-tRNA(Arg) + AMP + diphosphate. The chain is Arginine--tRNA ligase from Methylobacterium sp. (strain 4-46).